We begin with the raw amino-acid sequence, 316 residues long: MSDISKASLPKAIFLMGPTASGKTALAIELRKILPVELISVDSALIYKGMDIGTAKPNAEELLAAPHRLLDIRDPSQAYSAADFRRDALAEMADITAAGRIPLLVGGTMLYFKALLEGLSPLPSADPEVRARIEQQAAEQGWESLHRQLQEIDPVAAARIHPNDPQRLSRALEVFFISGKTLTELTQTSGDALPYQVHQFAIAPASRELLHQRIEQRFHQMLASGFEAEVRALFARGDLHTDLPSIRCVGYRQMWSYLEGEISYDEMVYRGVCATRQLAKRQITWLRGWEGVHWLDSEKPEQARDEVLQVVGAIAG.

17–24 provides a ligand contact to ATP; that stretch reads GPTASGKT. 19-24 contributes to the substrate binding site; it reads TASGKT. Interaction with substrate tRNA regions lie at residues 42-45, 166-170, 247-252, and 280-287; these read DSAL, QRLSR, RCVGYR, and KRQITWLR.

It belongs to the IPP transferase family. As to quaternary structure, monomer. The cofactor is Mg(2+).

It catalyses the reaction adenosine(37) in tRNA + dimethylallyl diphosphate = N(6)-dimethylallyladenosine(37) in tRNA + diphosphate. Functionally, catalyzes the transfer of a dimethylallyl group onto the adenine at position 37 in tRNAs that read codons beginning with uridine, leading to the formation of N6-(dimethylallyl)adenosine (i(6)A). The sequence is that of tRNA dimethylallyltransferase from Escherichia fergusonii (strain ATCC 35469 / DSM 13698 / CCUG 18766 / IAM 14443 / JCM 21226 / LMG 7866 / NBRC 102419 / NCTC 12128 / CDC 0568-73).